Consider the following 150-residue polypeptide: Large ribosomal subunit protein uL22c (150 aa).

The protein belongs to the universal ribosomal protein uL22 family. Part of the 50S ribosomal subunit.

It localises to the plastid. In terms of biological role, this protein binds specifically to 23S rRNA. Functionally, the globular domain of the protein is located near the polypeptide exit tunnel on the outside of the subunit, while an extended beta-hairpin is found that lines the wall of the exit tunnel in the center of the 70S ribosome. In Orobanche minor (Small broomrape), this protein is Large ribosomal subunit protein uL22c (rpl22).